A 236-amino-acid chain; its full sequence is Flagellar L-ring protein (236 aa).

The first 16 residues, Met-1–Gly-16, serve as a signal peptide directing secretion. Cys-17 carries N-palmitoyl cysteine lipidation. Cys-17 is lipidated: S-diacylglycerol cysteine.

Belongs to the FlgH family. As to quaternary structure, the basal body constitutes a major portion of the flagellar organelle and consists of four rings (L,P,S, and M) mounted on a central rod.

It localises to the cell outer membrane. The protein localises to the bacterial flagellum basal body. Assembles around the rod to form the L-ring and probably protects the motor/basal body from shearing forces during rotation. This is Flagellar L-ring protein from Sinorhizobium fredii (strain NBRC 101917 / NGR234).